A 182-amino-acid chain; its full sequence is ATP-dependent protease subunit HslV (182 aa).

The active site involves Thr12. 3 residues coordinate Na(+): Gly167, Cys170, and Thr173.

Belongs to the peptidase T1B family. HslV subfamily. In terms of assembly, a double ring-shaped homohexamer of HslV is capped on each side by a ring-shaped HslU homohexamer. The assembly of the HslU/HslV complex is dependent on binding of ATP.

It localises to the cytoplasm. It catalyses the reaction ATP-dependent cleavage of peptide bonds with broad specificity.. With respect to regulation, allosterically activated by HslU binding. Protease subunit of a proteasome-like degradation complex believed to be a general protein degrading machinery. The protein is ATP-dependent protease subunit HslV of Acidiphilium cryptum (strain JF-5).